The sequence spans 356 residues: GDSL esterase/lipase At5g37690 (356 aa).

The signal sequence occupies residues 1–18; that stretch reads MMILRLALAIVISTYATA. The active-site Nucleophile is Ser-34. Residues Asn-116 and Asn-291 are each glycosylated (N-linked (GlcNAc...) asparagine). Active-site residues include Asp-322 and His-325.

It belongs to the 'GDSL' lipolytic enzyme family.

The protein resides in the secreted. This Arabidopsis thaliana (Mouse-ear cress) protein is GDSL esterase/lipase At5g37690.